The sequence spans 355 residues: Glucose-1-phosphate thymidylyltransferase (355 aa).

The Mg(2+) site is built by Asp-107 and Asp-220.

It belongs to the glucose-1-phosphate thymidylyltransferase family. The cofactor is Mg(2+).

The enzyme catalyses dTTP + alpha-D-glucose 1-phosphate + H(+) = dTDP-alpha-D-glucose + diphosphate. It participates in antibiotic biosynthesis; streptomycin biosynthesis. Involved in the biosynthesis of the streptose moiety of streptomycin. Catalyzes the formation of dTDP-glucose, from dTTP and glucose 1-phosphate, as well as its pyrophosphorolysis. The protein is Glucose-1-phosphate thymidylyltransferase (strD) of Streptomyces griseus.